We begin with the raw amino-acid sequence, 608 residues long: UvrABC system protein C (608 aa).

One can recognise a GIY-YIG domain in the interval 16-94; the sequence is NRPGVYRMFD…IKEWRPPYNI (79 aa). Residues 204–239 form the UVR domain; that stretch reads NALADELNVGMEQAAMRLDFEKAAELRDQVAILRRV.

It belongs to the UvrC family. As to quaternary structure, interacts with UvrB in an incision complex.

It is found in the cytoplasm. Its function is as follows. The UvrABC repair system catalyzes the recognition and processing of DNA lesions. UvrC both incises the 5' and 3' sides of the lesion. The N-terminal half is responsible for the 3' incision and the C-terminal half is responsible for the 5' incision. The protein is UvrABC system protein C of Pseudomonas aeruginosa (strain ATCC 15692 / DSM 22644 / CIP 104116 / JCM 14847 / LMG 12228 / 1C / PRS 101 / PAO1).